Consider the following 481-residue polypeptide: UDP-N-acetylmuramate--L-alanine ligase (481 aa).

123 to 129 (GTHGKTT) is a binding site for ATP.

This sequence belongs to the MurCDEF family.

It localises to the cytoplasm. It carries out the reaction UDP-N-acetyl-alpha-D-muramate + L-alanine + ATP = UDP-N-acetyl-alpha-D-muramoyl-L-alanine + ADP + phosphate + H(+). The protein operates within cell wall biogenesis; peptidoglycan biosynthesis. In terms of biological role, cell wall formation. This is UDP-N-acetylmuramate--L-alanine ligase from Pseudomonas fluorescens (strain SBW25).